A 281-amino-acid chain; its full sequence is Pantothenate synthetase (281 aa).

30-37 (MGYLHEGH) lines the ATP pocket. The active-site Proton donor is the His37. Gln61 lines the (R)-pantoate pocket. Gln61 is a beta-alanine binding site. 147–150 (GEKD) serves as a coordination point for ATP. Gln153 serves as a coordination point for (R)-pantoate. ATP-binding positions include Val176 and 184 to 187 (MSSR).

It belongs to the pantothenate synthetase family. Homodimer.

It localises to the cytoplasm. The catalysed reaction is (R)-pantoate + beta-alanine + ATP = (R)-pantothenate + AMP + diphosphate + H(+). It functions in the pathway cofactor biosynthesis; (R)-pantothenate biosynthesis; (R)-pantothenate from (R)-pantoate and beta-alanine: step 1/1. Functionally, catalyzes the condensation of pantoate with beta-alanine in an ATP-dependent reaction via a pantoyl-adenylate intermediate. This chain is Pantothenate synthetase, found in Desulfatibacillum aliphaticivorans.